The sequence spans 257 residues: UPF0246 protein Sputcn32_1053 (257 aa).

This sequence belongs to the UPF0246 family.

The chain is UPF0246 protein Sputcn32_1053 from Shewanella putrefaciens (strain CN-32 / ATCC BAA-453).